Reading from the N-terminus, the 692-residue chain is Methionine--tRNA ligase (692 aa).

The 'HIGH' region signature appears at 12–22 (PYANGSFHIGH). Zn(2+) is bound by residues Cys143, Cys146, Cys156, and Cys159. Positions 341–345 (KMSKS) match the 'KMSKS' region motif. Residue Lys344 coordinates ATP. The region spanning 586 to 692 (DFAKIDLRIA…PGAQPGMRVR (107 aa)) is the tRNA-binding domain.

Belongs to the class-I aminoacyl-tRNA synthetase family. MetG type 1 subfamily. Homodimer. The cofactor is Zn(2+).

The protein localises to the cytoplasm. It catalyses the reaction tRNA(Met) + L-methionine + ATP = L-methionyl-tRNA(Met) + AMP + diphosphate. In terms of biological role, is required not only for elongation of protein synthesis but also for the initiation of all mRNA translation through initiator tRNA(fMet) aminoacylation. In Bordetella pertussis (strain Tohama I / ATCC BAA-589 / NCTC 13251), this protein is Methionine--tRNA ligase.